Consider the following 360-residue polypeptide: MPTILVSALEASSNIHLEELRHNLPKDYRFIGVFESKEALYSPREFSIMGFRDVIGRLGFLLKAHKEMVQLAKQADMVLLMDSSSFNIPLAKKIKKQDPHKKIMYYILPQVWAWKKWRAKSLEKYCDFLGAILPFEVGYYQKKAQYVGHPLLDEIKYYKKDIKGETLVFMPGSRKSEIAKMFPLFVKAAQILEQNEGFKRRVLVVPSFFKGLDLKALYGEDIKLFEISYDAHKSLFEAEFAFICSGTATLEAALIGTPFALAYRAKTMDFLIARMLVNLHYIGLANIFYNALNNETPGLGESQLHPELIQHFLSVEGLLKAYEEMDRERYFKESLRLREYLKHGSARKIAEEMAFLLNLT.

Belongs to the LpxB family.

It catalyses the reaction a lipid X + a UDP-2-N,3-O-bis[(3R)-3-hydroxyacyl]-alpha-D-glucosamine = a lipid A disaccharide + UDP + H(+). The protein operates within bacterial outer membrane biogenesis; LPS lipid A biosynthesis. Functionally, condensation of UDP-2,3-diacylglucosamine and 2,3-diacylglucosamine-1-phosphate to form lipid A disaccharide, a precursor of lipid A, a phosphorylated glycolipid that anchors the lipopolysaccharide to the outer membrane of the cell. This chain is Lipid-A-disaccharide synthase (lpxB), found in Helicobacter pylori (strain J99 / ATCC 700824) (Campylobacter pylori J99).